A 745-amino-acid chain; its full sequence is Kinesin-like protein KIN-14M (745 aa).

Residues 1-31 (MVGEMTNNGRIRPSFPVKDLTSNEGSEYGGP) are disordered. The interval 1 to 35 (MVGEMTNNGRIRPSFPVKDLTSNEGSEYGGPVEFT) is globular. Microtubule-binding regions lie at residues 65-77 (YVKR…RWFQ) and 198-745 (SLQL…LSLG). 2 coiled-coil regions span residues 76-223 (FQEL…GEKE) and 259-389 (KDEL…GNIR). Positions 387–724 (NIRVFCRVRP…LRFAARVNAC (338 aa)) constitute a Kinesin motor domain. Residue 472–479 (GQTGSGKT) participates in ATP binding.

This sequence belongs to the TRAFAC class myosin-kinesin ATPase superfamily. Kinesin family. KIN-14 subfamily. As to quaternary structure, bind to microtubules in an ATP-insensitive manner (in vitro). Homodimer and heterodimer with KIN14N/KATC (in vitro).

The protein resides in the cytoplasm. It localises to the cytoskeleton. The chain is Kinesin-like protein KIN-14M from Arabidopsis thaliana (Mouse-ear cress).